The following is a 26-amino-acid chain: GTP-binding protein Rheb (26 aa).

5 residues coordinate GTP: serine 1, serine 2, valine 13, tyrosine 16, and threonine 19. Serine 1 provides a ligand contact to Mg(2+). The short motif at 16–24 (YDPTIENTF) is the Effector region element. Threonine 19 serves as a coordination point for Mg(2+).

Belongs to the small GTPase superfamily. Rheb family.

It carries out the reaction GTP + H2O = GDP + phosphate + H(+). In terms of biological role, binds GTP and exhibits intrinsic GTPase activity. The polypeptide is GTP-binding protein Rheb (Crocodylus siamensis (Siamese crocodile)).